We begin with the raw amino-acid sequence, 501 residues long: 25-hydroxyvitamin D-1 alpha hydroxylase, mitochondrial (501 aa).

C448 provides a ligand contact to heme.

This sequence belongs to the cytochrome P450 family. Heme serves as cofactor. In terms of tissue distribution, kidney.

Its subcellular location is the mitochondrion membrane. The enzyme catalyses calcidiol + 2 reduced [adrenodoxin] + O2 + 2 H(+) = calcitriol + 2 oxidized [adrenodoxin] + H2O. It carries out the reaction secalciferol + 2 reduced [adrenodoxin] + O2 + 2 H(+) = calcitetrol + 2 oxidized [adrenodoxin] + H2O. It functions in the pathway hormone biosynthesis; cholecalciferol biosynthesis. Its function is as follows. Catalyzes the conversion of 25-hydroxyvitamin D3 (25(OH)D3) to 1-alpha,25-dihydroxyvitamin D3 (1alpha,25(OH)(2)D3), and of 24,25-dihydroxyvitamin D3 (24,25(OH)(2)D3) to 1-alpha,24,25-trihydroxyvitamin D3 (1alpha,24,25(OH)(3)D3). Is also active with 25-hydroxy-24-oxo-vitamin D3. Plays an important role in normal bone growth, calcium metabolism, and tissue differentiation. In Rattus norvegicus (Rat), this protein is 25-hydroxyvitamin D-1 alpha hydroxylase, mitochondrial (Cyp27b1).